Consider the following 359-residue polypeptide: Protein Wnt-5a (359 aa).

An N-terminal signal peptide occupies residues 1 to 20 (MASRYLTLAAALLASFLQVD). Cys-83 and Cys-94 form a disulfide bridge. Asn-93 and Asn-99 each carry an N-linked (GlcNAc...) asparagine glycan. Disulfide bonds link Cys-133-Cys-141, Cys-143-Cys-161, Cys-217-Cys-231, Cys-219-Cys-226, Cys-288-Cys-319, Cys-304-Cys-314, Cys-318-Cys-358, Cys-334-Cys-349, Cys-336-Cys-346, and Cys-341-Cys-342. Ser-223 carries the O-palmitoleoyl serine; by PORCN lipid modification. Residues Asn-291 and Asn-305 are each glycosylated (N-linked (GlcNAc...) asparagine).

The protein belongs to the Wnt family. Post-translationally, palmitoleoylation is required for efficient binding to frizzled receptors. Depalmitoleoylation leads to Wnt signaling pathway inhibition.

It is found in the secreted. Its subcellular location is the extracellular space. The protein localises to the extracellular matrix. Its function is as follows. Ligand for members of the frizzled family of seven transmembrane receptors. Can activate or inhibit canonical Wnt signaling, depending on receptor context. Required during embryogenesis for extension of the primary anterior-posterior axis. The protein is Protein Wnt-5a (WNT5A) of Pleurodeles waltl (Iberian ribbed newt).